We begin with the raw amino-acid sequence, 104 residues long: Protein U9 (104 aa).

The chain is Protein U9 (U9) from Homo sapiens (Human).